We begin with the raw amino-acid sequence, 281 residues long: Proteasome subunit beta (281 aa).

Residues 1–53 (MEANTRSTGRLPAAFLTPGSSSFMDFLSDHQPELLPGKRQLPPTQGVIEAPHG) constitute a propeptide, removed in mature form; by autocatalysis. Residue threonine 54 is the Nucleophile of the active site.

Belongs to the peptidase T1B family. As to quaternary structure, the 20S proteasome core is composed of 14 alpha and 14 beta subunits that assemble into four stacked heptameric rings, resulting in a barrel-shaped structure. The two inner rings, each composed of seven catalytic beta subunits, are sandwiched by two outer rings, each composed of seven alpha subunits. The catalytic chamber with the active sites is on the inside of the barrel. Has a gated structure, the ends of the cylinder being occluded by the N-termini of the alpha-subunits. Is capped by the proteasome-associated ATPase, ARC.

Its subcellular location is the cytoplasm. The enzyme catalyses Cleavage of peptide bonds with very broad specificity.. It participates in protein degradation; proteasomal Pup-dependent pathway. The formation of the proteasomal ATPase ARC-20S proteasome complex, likely via the docking of the C-termini of ARC into the intersubunit pockets in the alpha-rings, may trigger opening of the gate for substrate entry. Interconversion between the open-gate and close-gate conformations leads to a dynamic regulation of the 20S proteasome proteolysis activity. Functionally, component of the proteasome core, a large protease complex with broad specificity involved in protein degradation. This chain is Proteasome subunit beta, found in Streptomyces scabiei (strain 87.22).